Here is a 33-residue protein sequence, read N- to C-terminus: Gaegurin-3 (33 aa).

A disulfide bond links cysteine 27 and cysteine 33.

The protein belongs to the frog skin active peptide (FSAP) family. Brevinin subfamily. In terms of assembly, monomer. As to expression, expressed by the skin glands.

It is found in the secreted. Has a non-hemolytic activity. Has a broad spectrum of activity against both Gram-positive and Gram-negative bacteria, fungi and protozoa. The protein is Gaegurin-3 (GGN3) of Glandirana rugosa (Japanese wrinkled frog).